The sequence spans 163 residues: Small ribosomal subunit protein uS5 (163 aa).

In terms of domain architecture, S5 DRBM spans 8-71 (FIEKVVSLNR…EQARKAMMKI (64 aa)).

This sequence belongs to the universal ribosomal protein uS5 family. Part of the 30S ribosomal subunit. Contacts proteins S4 and S8.

Functionally, with S4 and S12 plays an important role in translational accuracy. Located at the back of the 30S subunit body where it stabilizes the conformation of the head with respect to the body. The sequence is that of Small ribosomal subunit protein uS5 from Lawsonia intracellularis (strain PHE/MN1-00).